A 489-amino-acid polypeptide reads, in one-letter code: Protein SOF1 (489 aa).

WD repeat units follow at residues 65–105 (GHRD…EFVS), 113–158 (VTGL…YSNK), 177–214 (DGESAFQGIDSHRENSTFATGGAKIHLWDVNRLKPVSD), 217–257 (WGAD…PTQK), 259–299 (VQTM…RSLN), 303–342 (DHVSAVMDVDFSPTGDEIVTGSYDKSIRIYKTNHGHSREI), and 346–385 (KRMQHVFQVKYSMDSKYIISGSDDGNVRLWRSKAWERSNV). Composition is skewed to basic and acidic residues over residues 440–459 (REANERRTRKDMPYISERKK) and 466–489 (HKYEDSGRDRKRRKEDDKRDTQEK). The disordered stretch occupies residues 440–489 (REANERRTRKDMPYISERKKQIVGTVHKYEDSGRDRKRRKEDDKRDTQEK).

The protein belongs to the WD repeat DCAF13/WDSOF1 family. In terms of assembly, interacts with snoRNA U3. Interacts with NOP1 and MPP10. Component of the ribosomal small subunit (SSU) processome composed of at least 40 protein subunits and snoRNA U3.

The protein localises to the nucleus. It localises to the nucleolus. In terms of biological role, required for ribosomal RNA processing. The sequence is that of Protein SOF1 (SOF1) from Saccharomyces cerevisiae (strain ATCC 204508 / S288c) (Baker's yeast).